A 420-amino-acid chain; its full sequence is Putative sporulation-specific glycosylase YdhD (420 aa).

LysM domains follow at residues 2 to 45 and 48 to 92; these read FIHI…ALLI and YVYT…KITI. In terms of domain architecture, GH18 spans 100-420; sequence AGTLSFYVLR…LRKFFTIRKV (321 aa). Catalysis depends on Glu212, which acts as the Proton donor.

It belongs to the glycosyl hydrolase 18 family. Chitinase class II subfamily.

It localises to the spore wall. This chain is Putative sporulation-specific glycosylase YdhD (ydhD), found in Bacillus subtilis (strain 168).